The following is a 382-amino-acid chain: 1-deoxy-D-xylulose 5-phosphate reductoisomerase (382 aa).

NADPH is bound by residues Thr-10, Gly-11, Ser-12, Ile-13, Asn-38, and Asn-120. Lys-121 is a 1-deoxy-D-xylulose 5-phosphate binding site. An NADPH-binding site is contributed by Glu-122. Residue Asp-146 coordinates Mn(2+). 4 residues coordinate 1-deoxy-D-xylulose 5-phosphate: Ser-147, Glu-148, Ser-172, and His-195. Glu-148 provides a ligand contact to Mn(2+). Residue Gly-201 participates in NADPH binding. Ser-208, Asn-213, Lys-214, and Glu-217 together coordinate 1-deoxy-D-xylulose 5-phosphate. Mn(2+) is bound at residue Glu-217.

This sequence belongs to the DXR family. The cofactor is Mg(2+). Mn(2+) serves as cofactor.

The enzyme catalyses 2-C-methyl-D-erythritol 4-phosphate + NADP(+) = 1-deoxy-D-xylulose 5-phosphate + NADPH + H(+). Its pathway is isoprenoid biosynthesis; isopentenyl diphosphate biosynthesis via DXP pathway; isopentenyl diphosphate from 1-deoxy-D-xylulose 5-phosphate: step 1/6. Functionally, catalyzes the NADPH-dependent rearrangement and reduction of 1-deoxy-D-xylulose-5-phosphate (DXP) to 2-C-methyl-D-erythritol 4-phosphate (MEP). In Thermoanaerobacter sp. (strain X514), this protein is 1-deoxy-D-xylulose 5-phosphate reductoisomerase.